We begin with the raw amino-acid sequence, 217 residues long: Ribose-5-phosphate isomerase A (217 aa).

Residues 28–31 (TGST), 81–84 (DGAD), and 94–97 (KGGG) contribute to the substrate site. Glu-103 acts as the Proton acceptor in catalysis. Lys-121 serves as a coordination point for substrate.

This sequence belongs to the ribose 5-phosphate isomerase family. Homodimer.

It carries out the reaction aldehydo-D-ribose 5-phosphate = D-ribulose 5-phosphate. It participates in carbohydrate degradation; pentose phosphate pathway; D-ribose 5-phosphate from D-ribulose 5-phosphate (non-oxidative stage): step 1/1. In terms of biological role, catalyzes the reversible conversion of ribose-5-phosphate to ribulose 5-phosphate. This is Ribose-5-phosphate isomerase A from Aeromonas hydrophila subsp. hydrophila (strain ATCC 7966 / DSM 30187 / BCRC 13018 / CCUG 14551 / JCM 1027 / KCTC 2358 / NCIMB 9240 / NCTC 8049).